The primary structure comprises 121 residues: Phosphoribosyl-ATP pyrophosphatase (121 aa).

It belongs to the PRA-PH family.

It is found in the cytoplasm. The enzyme catalyses 1-(5-phospho-beta-D-ribosyl)-ATP + H2O = 1-(5-phospho-beta-D-ribosyl)-5'-AMP + diphosphate + H(+). The protein operates within amino-acid biosynthesis; L-histidine biosynthesis; L-histidine from 5-phospho-alpha-D-ribose 1-diphosphate: step 2/9. This chain is Phosphoribosyl-ATP pyrophosphatase, found in Burkholderia vietnamiensis (strain G4 / LMG 22486) (Burkholderia cepacia (strain R1808)).